A 96-amino-acid polypeptide reads, in one-letter code: Small ribosomal subunit protein bS6 (96 aa).

Belongs to the bacterial ribosomal protein bS6 family.

In terms of biological role, binds together with bS18 to 16S ribosomal RNA. This is Small ribosomal subunit protein bS6 from Nocardioides sp. (strain ATCC BAA-499 / JS614).